A 599-amino-acid polypeptide reads, in one-letter code: Elongation factor 4 (599 aa).

The region spanning K4–K185 is the tr-type G domain. Residues D16–T21 and N132–D135 contribute to the GTP site.

The protein belongs to the TRAFAC class translation factor GTPase superfamily. Classic translation factor GTPase family. LepA subfamily.

It is found in the cell membrane. The enzyme catalyses GTP + H2O = GDP + phosphate + H(+). Functionally, required for accurate and efficient protein synthesis under certain stress conditions. May act as a fidelity factor of the translation reaction, by catalyzing a one-codon backward translocation of tRNAs on improperly translocated ribosomes. Back-translocation proceeds from a post-translocation (POST) complex to a pre-translocation (PRE) complex, thus giving elongation factor G a second chance to translocate the tRNAs correctly. Binds to ribosomes in a GTP-dependent manner. The protein is Elongation factor 4 of Mycoplasmoides gallisepticum (strain R(low / passage 15 / clone 2)) (Mycoplasma gallisepticum).